The following is a 3147-amino-acid chain: Bassianolide nonribosomal cyclodepsipeptide synthetase (3147 aa).

Residues 1–12 (MEPPNNANTGQL) are compositionally biased toward polar residues. Positions 1 to 23 (MEPPNNANTGQLGPTLPNGTVDL) are disordered. A condensation 1 region spans residues 69–454 (HVVYEIPEDV…INKLQSTDGS (386 aa)). Positions 495-887 (DDTPNKPAVC…GRMDSQVKIR (393 aa)) are adenylation 1. Residues 1015–1091 (PDASAGVTKL…SLQAAIGGSS (77 aa)) form the Carrier 1 domain. At S1052 the chain carries O-(pantetheine 4'-phosphoryl)serine. A condensation 2 region spans residues 1109 to 1538 (SYSQGRLWFL…QTLISVVPLT (430 aa)). Residues 1567–1973 (FATQVASYPD…GRMDFQFKIR (407 aa)) form an adenylation 2 region. An S-adenosyl-L-methionine-dependent N-methyltransferase (MT) region spans residues 2041–2181 (TYTELDTVSS…FPTRDYLEQV (141 aa)). 2 Carrier domains span residues 2515 to 2589 (FPLS…RQQL) and 2615 to 2689 (APTT…EVSQ). An O-(pantetheine 4'-phosphoryl)serine mark is found at S2549 and S2649. Residues 2735 to 3139 (QDVYLATHLQ…THLMEQVCNT (405 aa)) form a condensation 3 region.

It belongs to the NRP synthetase family.

Functionally, bassianolide nonribosomal synthetase that mediates the biosynthesis of bassianolide (BSL), a non-ribosomal cyclodepsipeptide that shows insecticidal and cancer cell antiproliferative activity. BSLS first catalyzes the iterative synthesis of an enzyme-bound dipeptidol monomer intermediate from D-2-hydroxyisovalerate and L-leucine before performing the condensation and cyclization of 4 dipeptidol monomers to yield the cyclic tetrameric ester bassianolide. The N-methyltransferase MT domain is responsible for the methylation of the leucine residues of bassianolide. BSLS is flexible with both the amino acid and hydroxyl acid precursors, and produces bassianolide as the major product (containing N-methyl-L-Leu), together with small amounts of beauvericin and its analogs beauvericins A-C (containing N-methyl-L-Phe). In Beauveria bassiana (strain ARSEF 2860) (White muscardine disease fungus), this protein is Bassianolide nonribosomal cyclodepsipeptide synthetase.